A 359-amino-acid polypeptide reads, in one-letter code: MQTLANLLNTIPAIDPAAMSRAQRHIDGLLKPVGSLGRLEALGVQLAGMPGLNGIPHVGKKAVLVMCADHGVWEEGVAISPKEVTAIQAENMTRGTTGVCVLAAQAGANVHVIDVGIDTAEPIPGLINMRVARGSGNIASAPAMSRRQAEKLLLDVICYTRELAKNGVTLFGVGELGMANTTPAAAIVSTITGRDPEEVVGIGANLPTDKLANKIDVVRRAITLNQPNPQDGVNVLAKVGGFDLVGMAGVMLGAASCGLPVLLDGFLSYAAALAACQMSPAIKPYLIPSHLSAEKGARIALSHLGLEPFLNMDMRLGEGSGAALAMPIIEAACAIYNNMGELAASKIVLPGNTTSDLNS.

Catalysis depends on Glu318, which acts as the Proton acceptor.

It belongs to the CobT family. Homodimer.

It carries out the reaction 5,6-dimethylbenzimidazole + nicotinate beta-D-ribonucleotide = alpha-ribazole 5'-phosphate + nicotinate + H(+). Its pathway is nucleoside biosynthesis; alpha-ribazole biosynthesis; alpha-ribazole from 5,6-dimethylbenzimidazole: step 1/2. Functionally, catalyzes the synthesis of alpha-ribazole-5'-phosphate from nicotinate mononucleotide (NAMN) and 5,6-dimethylbenzimidazole (DMB). In Escherichia coli O157:H7, this protein is Nicotinate-nucleotide--dimethylbenzimidazole phosphoribosyltransferase.